Consider the following 369-residue polypeptide: NAD-dependent epimerase/dehydratase FUM13 (369 aa).

Residue tyrosine 176 participates in NADP(+) binding.

Belongs to the NAD(P)-dependent epimerase/dehydratase family. Dihydroflavonol-4-reductase subfamily.

It functions in the pathway mycotoxin biosynthesis. NAD-dependent epimerase/dehydratase; part of the gene cluster that mediates the biosynthesis of fumonisins B1 (FB1), B2 (FB2), B3 (FB3), and B4 (FB4), which are carcinogenic mycotoxins. Within the pathway, FUM13 stereospecifically reduces the intermediate 3-keto intermediate 2-amino-3-oxo-12,16-dimethylicosane to the 3-hydroxyl product 2-amino-3-hydroxy-12,16-dimethylicosane. The biosynthesis starts with the FUM1-catalyzed carbon chain assembly from one molecule of acetyl-CoA, eight molecules of malonyl-CoA, and two molecules of methionine (in S-adenosyl form). The C18 polyketide chain is released from the enzyme by a nucleophilic attack of a carbanion, which is derived from R-carbon of alanine by decarboxylation, on the carbonyl carbon of polyketide acyl chain. This step is catalyzed by the pyridoxal 5'-phosphate-dependent aminoacyl transferase FUM8. The resultant 3-keto intermediate is then stereospecifically reduced to a 3-hydroxyl product by reductase FUM13. Subsequent oxidations at C-10 by the cytochrome P450 monooxygenase FUM2, C-14 and C-15 by FUM6, FUM12 or FUM15, tricarballylic esterification of the hydroxyl groups on C-14 and C-15 by acyltransferase FUM14, and C-5 hydroxylation by 2-keto-glutarate-dependent dioxygenase FUM3 furnish the biosynthesis of fumonisins. The tricarballylic moieties are most likely derived from the citric acid cycle, and their addition to the carbon backbone may involve FUM7, FUM10, FUM11 and FUM14. The polypeptide is NAD-dependent epimerase/dehydratase FUM13 (Gibberella moniliformis (strain M3125 / FGSC 7600) (Maize ear and stalk rot fungus)).